The sequence spans 290 residues: 33 kDa chaperonin (290 aa).

Disulfide bonds link cysteine 231–cysteine 233 and cysteine 263–cysteine 266.

This sequence belongs to the HSP33 family. Post-translationally, under oxidizing conditions two disulfide bonds are formed involving the reactive cysteines. Under reducing conditions zinc is bound to the reactive cysteines and the protein is inactive.

The protein resides in the cytoplasm. Redox regulated molecular chaperone. Protects both thermally unfolding and oxidatively damaged proteins from irreversible aggregation. Plays an important role in the bacterial defense system toward oxidative stress. This is 33 kDa chaperonin from Thermotoga petrophila (strain ATCC BAA-488 / DSM 13995 / JCM 10881 / RKU-1).